The chain runs to 235 residues: 2-C-methyl-D-erythritol 4-phosphate cytidylyltransferase (235 aa).

The protein belongs to the IspD/TarI cytidylyltransferase family. IspD subfamily.

The catalysed reaction is 2-C-methyl-D-erythritol 4-phosphate + CTP + H(+) = 4-CDP-2-C-methyl-D-erythritol + diphosphate. It participates in isoprenoid biosynthesis; isopentenyl diphosphate biosynthesis via DXP pathway; isopentenyl diphosphate from 1-deoxy-D-xylulose 5-phosphate: step 2/6. Functionally, catalyzes the formation of 4-diphosphocytidyl-2-C-methyl-D-erythritol from CTP and 2-C-methyl-D-erythritol 4-phosphate (MEP). This chain is 2-C-methyl-D-erythritol 4-phosphate cytidylyltransferase, found in Leptospira borgpetersenii serovar Hardjo-bovis (strain L550).